Here is a 311-residue protein sequence, read N- to C-terminus: tRNA-cytidine(32) 2-sulfurtransferase (311 aa).

The short motif at 58–63 (SGGKDS) is the PP-loop motif element. [4Fe-4S] cluster is bound by residues C133, C136, and C224.

This sequence belongs to the TtcA family. Homodimer. Mg(2+) serves as cofactor. It depends on [4Fe-4S] cluster as a cofactor.

The protein resides in the cytoplasm. The enzyme catalyses cytidine(32) in tRNA + S-sulfanyl-L-cysteinyl-[cysteine desulfurase] + AH2 + ATP = 2-thiocytidine(32) in tRNA + L-cysteinyl-[cysteine desulfurase] + A + AMP + diphosphate + H(+). It participates in tRNA modification. Catalyzes the ATP-dependent 2-thiolation of cytidine in position 32 of tRNA, to form 2-thiocytidine (s(2)C32). The sulfur atoms are provided by the cysteine/cysteine desulfurase (IscS) system. The protein is tRNA-cytidine(32) 2-sulfurtransferase of Polaromonas sp. (strain JS666 / ATCC BAA-500).